A 548-amino-acid chain; its full sequence is MYEANMLRLSQRISNAVNHFSTAMMSGASASLTEGSAIIPFSNPNEVFYNPVQQFNRDLSVTAIRAWSETRSKKIVAKSHHRHQLLDQNSELSQENLTKCDTTHDFEKNCSEKTDSTSADNIAGFTILEALSATGLRSIRYAKELPNVKRILANDLLENAVKTIEKNVNYNNVSDIVIPNKGDANAVMHMNKFHYDVIDLDPYGSAAPFLDAAVQSVSKDGLLCITCTDSAVLAGNAYPEKCFSNYGGSSLRSNFCHEQAVRHLLYAIAASAAKYGRAIKPLLSLSIDFYFRVFVQIKAKPVLVKNLQSQSLLIYHCSGCGSFAEQPLGKTSPGRLPGTTKFSNASGPPVSANCEHCGYVHHVGGPLWGGPLHDAEFLKKMRAIAEDLDPEVYGTKRRILGMLALADEELPDVPFYFVLSQICSVLRSQSPPQNIFVSALLNAGYRVSGSHAKSNAIKTNAPWSFVWDVLRSWIKDHPVKLENISKTSAGAAILEKTPTAEVDFTFRPDSEFASKKEGYTRYQMNPTENWGPKSKPGKRTIAEVDSKS.

The region spanning 30-470 is the Trm1 methyltransferase domain; that stretch reads ASLTEGSAII…APWSFVWDVL (441 aa). Arg-57, Arg-137, Asp-155, and Ala-186 together coordinate S-adenosyl-L-methionine. Residues Cys-317, Cys-320, Cys-354, and Cys-357 each coordinate Zn(2+). The interval 523-548 is disordered; it reads QMNPTENWGPKSKPGKRTIAEVDSKS.

Belongs to the class I-like SAM-binding methyltransferase superfamily. Trm1 family.

The protein resides in the mitochondrion. The protein localises to the nucleus. It localises to the cytoplasm. The catalysed reaction is guanosine(26) in tRNA + 2 S-adenosyl-L-methionine = N(2)-dimethylguanosine(26) in tRNA + 2 S-adenosyl-L-homocysteine + 2 H(+). Its function is as follows. Dimethylates a single guanine residue at position 26 of nuclear- and mitochondrial-encoded tRNAs using S-adenosyl-L-methionine as donor of the methyl groups. Also has tRNA strand annealing and dissociation activity independently of its tRNA guanine-dimethyltransferase activity. This Schizosaccharomyces pombe (strain 972 / ATCC 24843) (Fission yeast) protein is tRNA (guanine(26)-N(2))-dimethyltransferase.